The following is a 711-amino-acid chain: Glycine--tRNA ligase beta subunit (711 aa).

This sequence belongs to the class-II aminoacyl-tRNA synthetase family. In terms of assembly, tetramer of two alpha and two beta subunits.

Its subcellular location is the cytoplasm. The enzyme catalyses tRNA(Gly) + glycine + ATP = glycyl-tRNA(Gly) + AMP + diphosphate. The protein is Glycine--tRNA ligase beta subunit of Polaromonas naphthalenivorans (strain CJ2).